The following is a 357-amino-acid chain: MLSLQTLAKKVVACNYLSSDYDYTLQRFGLWWDLGPIHLCNNCKQIFSYKHLQCFSEDDLCLEAALVKAVKSDNLELIRLFVDWGANPEYGLIRVPAVHLKRLCTELGGLTPVTEPRLLEILKEVAKLKSCAGVLLGYDMFCHNPLLETVTRTTLDTVTYTCSNIPLTGDTAHLLLTKFWFALALRHNFTKAIHYFYKRHKNHLYWRVACSLYFNNIFDIHELCREKEICISPNLMMKFACLQKKNYAAIYYCYRLGASLDYGMNLSIYNNNTLNMFFCIDLGATDFDRAQHIAHKAYMYNLSNIFLVKQLFSRDVTLALDVTEPQEIYDRLKSYTSKNLKRAEEYLTAHPEIIVID.

This sequence belongs to the asfivirus MGF 360 family.

Its function is as follows. Plays a role in virus cell tropism, and may be required for efficient virus replication in macrophages. The protein is Protein MGF 360-8L of African swine fever virus (isolate Tick/South Africa/Pretoriuskop Pr4/1996) (ASFV).